The primary structure comprises 93 residues: SH3 domain-binding glutamic acid-rich-like protein 3 (93 aa).

An N-acetylserine modification is found at serine 2. The Glutaredoxin domain occupies 2 to 93 (SGLRVYSTSV…NTLQEFLKLA (92 aa)). The O-linked (GalNAc...) threonine glycan is linked to threonine 9.

The protein belongs to the SH3BGR family. Interacts with MYO1C (via its IQ motifs); the interaction is dependent on calcium and takes place at membrane ruffles. In terms of processing, may be glycosylated. In terms of tissue distribution, expressed in heart, liver, lung, kidney, spleen, thymus, ovarian follicles, skeletal muscle, brain, lymph node and mammary epithelial and stromal cells (at protein level).

It is found in the cytoplasm. Its subcellular location is the cytosol. It localises to the cell projection. The protein localises to the ruffle membrane. The protein resides in the nucleus. Functionally, could act as a modulator of glutaredoxin biological activity. May play a role in cytoskeleton organization. The chain is SH3 domain-binding glutamic acid-rich-like protein 3 from Rattus norvegicus (Rat).